Consider the following 859-residue polypeptide: Envelope glycoprotein (859 aa).

Residues 1–6 (MVSIAF) constitute a propeptide that is removed on maturation. At 7–614 (YGGIPGGIST…KDLWSHIGNW (608 aa)) the chain is on the extracellular side. Residues Asn-40, Asn-112, Asn-141, Asn-148, Asn-186, Asn-214, Asn-233, Asn-244, Asn-313, Asn-340, Asn-368, Asn-399, Asn-406, and Asn-411 are each glycosylated (N-linked (GlcNAc...) asparagine; by host). Residues 446–466 (FGISAIVAAIVAATAIAASAT) form a fusion peptide region. N-linked (GlcNAc...) asparagine; by host glycosylation is found at Asn-483 and Asn-490. The immunosuppression stretch occupies residues 498 to 513 (LIERQIKILYAMILQT). Residues Asn-550 and Asn-557 are each glycosylated (N-linked (GlcNAc...) asparagine; by host). Coiled coils occupy residues 576 to 624 (ILTT…SIIK) and 663 to 699 (KKFHHKHASREDTWDQAQHNIHLAGVTGGSGDKYYKQ). The chain crosses the membrane as a helical span at residues 615-635 (IPGLGASIIKYIVMFLLIYLL). Topologically, residues 636-859 (LTSSPKILRA…TSHVSMPQYV (224 aa)) are cytoplasmic.

In terms of assembly, the mature envelope protein (Env) consists of a trimer of SU-TM heterodimers attached by noncovalent interactions or by a labile interchain disulfide bond. Post-translationally, specific enzymatic cleavages in vivo yield mature proteins. Envelope glycoproteins are synthesized as an inactive precursor that is N-glycosylated and processed likely by host cell furin or by a furin-like protease in the Golgi to yield the mature SU and TM proteins. The cleavage site between SU and TM requires the minimal sequence [KR]-X-[KR]-R.

Its subcellular location is the virion membrane. It is found in the host cell membrane. Its function is as follows. The surface protein (SU) attaches the virus to the host cell by binding to its receptor. This interaction triggers the refolding of the transmembrane protein (TM) and is thought to activate its fusogenic potential by unmasking its fusion peptide. Fusion occurs at the host cell plasma membrane. The transmembrane protein (TM) acts as a class I viral fusion protein. Under the current model, the protein has at least 3 conformational states: pre-fusion native state, pre-hairpin intermediate state, and post-fusion hairpin state. During viral and target cell membrane fusion, the coiled coil regions (heptad repeats) assume a trimer-of-hairpins structure, positioning the fusion peptide in close proximity to the C-terminal region of the ectodomain. The formation of this structure appears to drive apposition and subsequent fusion of viral and target cell membranes. Membranes fusion leads to delivery of the nucleocapsid into the cytoplasm. This Equus asinus (Donkey) protein is Envelope glycoprotein (env).